A 502-amino-acid chain; its full sequence is Lanosterol 14-alpha demethylase (502 aa).

A helical transmembrane segment spans residues 22-42 (GNLASMLLIACAFTLSLVYLF). Position 448 (Cys448) interacts with heme.

Belongs to the cytochrome P450 family. Heme is required as a cofactor. Ubiquitinated by MARCHF6, leading to proteasomal degradation.

It is found in the endoplasmic reticulum membrane. Its subcellular location is the microsome membrane. It carries out the reaction a 14alpha-methyl steroid + 3 reduced [NADPH--hemoprotein reductase] + 3 O2 = a Delta(14) steroid + formate + 3 oxidized [NADPH--hemoprotein reductase] + 4 H2O + 4 H(+). The catalysed reaction is lanosterol + 3 reduced [NADPH--hemoprotein reductase] + 3 O2 = 4,4-dimethyl-5alpha-cholesta-8,14,24-trien-3beta-ol + formate + 3 oxidized [NADPH--hemoprotein reductase] + 4 H2O + 4 H(+). The enzyme catalyses 24,25-dihydrolanosterol + 3 reduced [NADPH--hemoprotein reductase] + 3 O2 = 4,4-dimethyl-8,14-cholestadien-3beta-ol + formate + 3 oxidized [NADPH--hemoprotein reductase] + 4 H2O + 4 H(+). It catalyses the reaction a 14alpha-methyl steroid + reduced [NADPH--hemoprotein reductase] + O2 = a 14alpha-hydroxymethyl steroid + oxidized [NADPH--hemoprotein reductase] + H2O + H(+). It carries out the reaction a 14alpha-hydroxymethyl steroid + reduced [NADPH--hemoprotein reductase] + O2 = a 14alpha-formyl steroid + oxidized [NADPH--hemoprotein reductase] + 2 H2O + H(+). The catalysed reaction is a 14alpha-formyl steroid + reduced [NADPH--hemoprotein reductase] + O2 = a Delta(14) steroid + formate + oxidized [NADPH--hemoprotein reductase] + H2O + 2 H(+). The enzyme catalyses lanosterol + reduced [NADPH--hemoprotein reductase] + O2 = 32-hydroxylanosterol + oxidized [NADPH--hemoprotein reductase] + H2O + H(+). It catalyses the reaction 32-hydroxylanosterol + reduced [NADPH--hemoprotein reductase] + O2 = 32-oxolanosterol + oxidized [NADPH--hemoprotein reductase] + 2 H2O + H(+). It carries out the reaction 32-oxolanosterol + reduced [NADPH--hemoprotein reductase] + O2 = 4,4-dimethyl-5alpha-cholesta-8,14,24-trien-3beta-ol + formate + oxidized [NADPH--hemoprotein reductase] + H2O + 2 H(+). The catalysed reaction is 24,25-dihydrolanosterol + reduced [NADPH--hemoprotein reductase] + O2 = 32-hydroxy-24,25-dihydrolanosterol + oxidized [NADPH--hemoprotein reductase] + H2O + H(+). The enzyme catalyses 32-hydroxy-24,25-dihydrolanosterol + reduced [NADPH--hemoprotein reductase] + O2 = 32-oxo-24,25-dihydrolanosterol + oxidized [NADPH--hemoprotein reductase] + 2 H2O + H(+). It catalyses the reaction 32-oxo-24,25-dihydrolanosterol + reduced [NADPH--hemoprotein reductase] + O2 = 4,4-dimethyl-8,14-cholestadien-3beta-ol + formate + oxidized [NADPH--hemoprotein reductase] + H2O + 2 H(+). It participates in steroid biosynthesis; zymosterol biosynthesis; zymosterol from lanosterol: step 1/6. Inhibited by azalanstat. Inhibited by azole antifungal agents ketoconazole, itraconazole and fluconazole. Its function is as follows. Sterol 14alpha-demethylase that plays a critical role in the cholesterol biosynthesis pathway, being cholesterol the major sterol component in mammalian membranes as well as a precursor for bile acid and steroid hormone synthesis. Cytochrome P450 monooxygenase that catalyzes the three-step oxidative removal of the 14alpha-methyl group (C-32) of sterols such as lanosterol (lanosta-8,24-dien-3beta-ol) and 24,25-dihydrolanosterol (DHL) in the form of formate, and converts the sterols to 4,4-dimethyl-5alpha-cholesta-8,14,24-trien-3beta-ol and 4,4-dimethyl-8,14-cholestadien-3beta-ol, respectively, which are intermediates of cholesterol biosynthesis. Can also demethylate substrates not intrinsic to mammals, such as eburicol (24-methylene-24,25-dihydrolanosterol), but at a lower rate than DHL. The polypeptide is Lanosterol 14-alpha demethylase (Bos taurus (Bovine)).